The chain runs to 532 residues: E3 ubiquitin-protein ligase rnf8-B (532 aa).

Residues 30-84 (VTMGRGLGVTYQLKPTLCPLMISRTHCLFKQNARDEWTVTDNKSLNGVWRNKERL) form the FHA domain. Residues 127–209 (SLIRPLPGKT…VETDTVSPTQ (83 aa)) form a disordered region. Positions 169–178 (VSRDGEDSAK) are enriched in basic and acidic residues. The segment at 377 to 415 (CIICSEHFIEAVTLNCAHSFCSYCIKSWRKRKEECPICR) adopts an RING-type zinc-finger fold.

This sequence belongs to the RNF8 family. In terms of assembly, homodimer. Forms a E2-E3 ubiquitin ligase complex composed of the rnf8 homodimer and a E2 heterodimer of ube2n and ube2v2.

It is found in the nucleus. It catalyses the reaction S-ubiquitinyl-[E2 ubiquitin-conjugating enzyme]-L-cysteine + [acceptor protein]-L-lysine = [E2 ubiquitin-conjugating enzyme]-L-cysteine + N(6)-ubiquitinyl-[acceptor protein]-L-lysine.. It participates in protein modification; protein ubiquitination. Functionally, E3 ubiquitin-protein ligase that plays a key role in DNA damage signaling via 2 distinct roles: by mediating the 'Lys-63'-linked ubiquitination of histones H2A and H2AX and promoting the recruitment of DNA repair proteins at double-strand breaks (DSBs) sites, and by catalyzing 'Lys-48'-linked ubiquitination to remove target proteins from DNA damage sites. Following DNA DSBs, it is recruited to the sites of damage by ATM-phosphorylated mdc1 and catalyzes the 'Lys-63'-linked ubiquitination of histones H2A and H2AX, thereby promoting the formation of tp53bp1 and brca1 ionizing radiation-induced foci (IRIF). H2A ubiquitination also mediates the ATM-dependent transcriptional silencing at regions flanking DSBs in cis, a mechanism to avoid collision between transcription and repair intermediates. Also catalyzes the formation of 'Lys-48'-linked polyubiquitin chains, leading to degradation of substrate proteins. In addition to its function in damage signaling, also plays a role in higher-order chromatin structure by mediating extensive chromatin decondensation. The sequence is that of E3 ubiquitin-protein ligase rnf8-B from Xenopus laevis (African clawed frog).